Consider the following 266-residue polypeptide: Diphthine synthase (266 aa).

S-adenosyl-L-methionine is bound by residues leucine 9, aspartate 84, valine 87, 112 to 113 (SI), leucine 169, alanine 210, and histidine 235.

It belongs to the diphthine synthase family. In terms of assembly, homodimer.

The catalysed reaction is 2-[(3S)-amino-3-carboxypropyl]-L-histidyl-[translation elongation factor 2] + 3 S-adenosyl-L-methionine = diphthine-[translation elongation factor 2] + 3 S-adenosyl-L-homocysteine + 3 H(+). It participates in protein modification; peptidyl-diphthamide biosynthesis. In terms of biological role, S-adenosyl-L-methionine-dependent methyltransferase that catalyzes the trimethylation of the amino group of the modified target histidine residue in translation elongation factor 2 (EF-2), to form an intermediate called diphthine. The three successive methylation reactions represent the second step of diphthamide biosynthesis. The polypeptide is Diphthine synthase (Methanosarcina acetivorans (strain ATCC 35395 / DSM 2834 / JCM 12185 / C2A)).